Here is a 241-residue protein sequence, read N- to C-terminus: uncharacterized protein (241 aa).

One can recognise an HTH luxR-type domain in the interval 147–212; it reads FSYRSVILTL…EMYAWINSAQ (66 aa).

This is an uncharacterized protein from Escherichia coli O157:H7.